A 538-amino-acid chain; its full sequence is AAA ATPase forming ring-shaped complexes (538 aa).

The stretch at A14–E54 forms a coiled coil. G240–L245 is a binding site for ATP.

This sequence belongs to the AAA ATPase family. In terms of assembly, homohexamer. Assembles into a hexameric ring structure.

The polypeptide is AAA ATPase forming ring-shaped complexes (Corynebacterium urealyticum (strain ATCC 43042 / DSM 7109)).